A 549-amino-acid chain; its full sequence is Longitudinals lacking protein, isoforms H/M/V (549 aa).

The BTB domain maps to 32–97; that stretch reads VDCTLAAEGK…MYRGEVNISQ (66 aa). Disordered regions lie at residues 115–200 and 228–340; these read LSDN…SSVL and SSGP…ASAS. Composition is skewed to low complexity over residues 162–175, 228–251, 263–293, and 329–340; these read SGDVSGSREGSSSP, SSGPAAGTSSQASSTQQQQPLTST, TSSTAAPASGASASAAVQQAHLHQQQAQTTS, and NSATGPNPASAS.

In terms of tissue distribution, mostly neuronal.

Its subcellular location is the nucleus. Its function is as follows. Putative transcription factor required for axon growth and guidance in the central and peripheral nervous systems. Repels CNS axons away from the midline by promoting the expression of the midline repellent sli and its receptor robo. This Drosophila melanogaster (Fruit fly) protein is Longitudinals lacking protein, isoforms H/M/V.